The primary structure comprises 89 residues: Small ribosomal subunit protein uS15 (89 aa).

It belongs to the universal ribosomal protein uS15 family. In terms of assembly, part of the 30S ribosomal subunit. Forms a bridge to the 50S subunit in the 70S ribosome, contacting the 23S rRNA.

Functionally, one of the primary rRNA binding proteins, it binds directly to 16S rRNA where it helps nucleate assembly of the platform of the 30S subunit by binding and bridging several RNA helices of the 16S rRNA. Forms an intersubunit bridge (bridge B4) with the 23S rRNA of the 50S subunit in the ribosome. The polypeptide is Small ribosomal subunit protein uS15 (Clavibacter michiganensis subsp. michiganensis (strain NCPPB 382)).